We begin with the raw amino-acid sequence, 372 residues long: Rab9 effector protein with kelch motifs (372 aa).

Kelch repeat units follow at residues 49–95, 100–146, 151–200, 204–250, and 254–303; these read KVFI…FIPS, RIWV…TSSA, QLYV…VMVA, KLFI…SAVA, and HVYI…IIPW. The residue at position 133 (S133) is a Phosphoserine. The tract at residues 314-340 is disordered; that stretch reads SNSLTLNHEAEKEDSADKVMSHSGDSH. Residues 321–340 show a composition bias toward basic and acidic residues; sequence HEAEKEDSADKVMSHSGDSH.

As to quaternary structure, interacts with PIKFYVE; the interaction recruits RABEPK to the endosomal membrane. Interacts with RAB9 in its GTP-bound conformation. Phosphorylated on Ser residues by PIKFYVE.

The protein localises to the cytoplasm. It localises to the endosome membrane. Functionally, rab9 effector required for endosome to trans-Golgi network (TGN) transport. The polypeptide is Rab9 effector protein with kelch motifs (Homo sapiens (Human)).